Consider the following 609-residue polypeptide: Pentatricopeptide repeat-containing protein At1g03540 (609 aa).

PPR repeat units follow at residues 25 to 59 (SAPT…EIPA), 60 to 94 (TPKL…GLET), 95 to 126 (DRNV…RFVK), 127 to 161 (DAIS…GLDA), 162 to 196 (NEFT…GFEW), 197 to 227 (NHFI…MPEP), 228 to 263 (DVIC…GLVP), 264 to 298 (DGST…GIGS), 299 to 329 (NVVV…MSKK), 330 to 364 (NSVS…DLYC), 396 to 426 (NVIV…MSIR), 427 to 461 (NMIT…GIKP), 462 to 497 (DYIS…GIKP), and 498 to 532 (GTEH…NDAS). Residues 533 to 609 (LWGVLLGPCA…TVGQSWIDAH (77 aa)) form a type E motif region.

This sequence belongs to the PPR family. PCMP-E subfamily.

This chain is Pentatricopeptide repeat-containing protein At1g03540 (PCMP-E4), found in Arabidopsis thaliana (Mouse-ear cress).